The sequence spans 121 residues: HTH-type transcriptional regulator MerD (121 aa).

One can recognise an HTH merR-type domain in the interval 3 to 72 (AYTVSRLALD…LDALARLCRA (70 aa)). Positions 6–25 (VSRLALDAGVSVHIVRDYLL) form a DNA-binding region, H-T-H motif.

The polypeptide is HTH-type transcriptional regulator MerD (merD) (Acinetobacter calcoaceticus).